Here is a 264-residue protein sequence, read N- to C-terminus: 3-deoxy-manno-octulosonate cytidylyltransferase (264 aa).

It belongs to the KdsB family.

The protein localises to the cytoplasm. The catalysed reaction is 3-deoxy-alpha-D-manno-oct-2-ulosonate + CTP = CMP-3-deoxy-beta-D-manno-octulosonate + diphosphate. Its pathway is nucleotide-sugar biosynthesis; CMP-3-deoxy-D-manno-octulosonate biosynthesis; CMP-3-deoxy-D-manno-octulosonate from 3-deoxy-D-manno-octulosonate and CTP: step 1/1. It participates in bacterial outer membrane biogenesis; lipopolysaccharide biosynthesis. Functionally, activates KDO (a required 8-carbon sugar) for incorporation into bacterial lipopolysaccharide in Gram-negative bacteria. The protein is 3-deoxy-manno-octulosonate cytidylyltransferase of Marinomonas sp. (strain MWYL1).